Here is a 334-residue protein sequence, read N- to C-terminus: Replication-associated protein (334 aa).

One can recognise a CRESS-DNA virus Rep endonuclease domain in the interval 9 to 111 (RLQSKYVFLT…DGDIKTRGDF (103 aa)). Positions 16-19 (FLTY) match the RCR-1 motif. Residues glutamate 50, histidine 58, and histidine 60 each coordinate a divalent metal cation. The RCR-2 motif lies at 58–60 (HYH). Tyrosine 98 functions as the For DNA cleavage activity in the catalytic mechanism. Positions 98–101 (YISK) match the RCR-3 motif. Residue aspartate 102 coordinates a divalent metal cation. The tract at residues 160-172 (SANKLFPPQPEQY) is oligomerization. 213-220 (GPTRTGKT) contributes to the ATP binding site. The transactivation stretch occupies residues 236–254 (IDFTNYDEHATYNIIDDIP). The Nuclear localization signal motif lies at 276-286 (KYGKKKKIKGG).

This sequence belongs to the geminiviridae Rep protein family. As to quaternary structure, homooligomer. Rep binds to repeated DNA motifs (iterons). Forms the O-complex, which is a Rep-DNA complex involved in the initiation of RCR. Part of the C- and V-complexes which are RepA-Rep-DNA complexes involved in the c-sense and v-sense transcription. The cofactor is Mg(2+). Requires Mn(2+) as cofactor.

The protein resides in the host nucleus. Its function is as follows. Essential for the replication of viral ssDNA. The closed circular ssDNA genome is first converted to a superhelical dsDNA. Rep binds a specific region at the genome origin of replication. It introduces an endonucleolytic nick within the conserved sequence 5'-TAATATTAC-3' in the intergenic region of the genome present in all geminiviruses, thereby initiating the rolling circle replication (RCR). Following cleavage, binds covalently to the 5'-phosphate of DNA as a tyrosyl ester. The cleavage gives rise to a free 3'-OH that serves as a primer for the cellular DNA polymerase. The polymerase synthesizes the (+) strand DNA by rolling circle mechanism. After one round of replication, a Rep-catalyzed nucleotidyl transfer reaction releases a circular single-stranded virus genome, thereby terminating the replication. Displays origin-specific DNA cleavage, nucleotidyl transferase, ATPase and helicase activities. Acts a an inhibitor of C-sense gene transcription. The polypeptide is Replication-associated protein (Phaseolus vulgaris (Kidney bean)).